The primary structure comprises 671 residues: UvrABC system protein B (671 aa).

A Helicase ATP-binding domain is found at 25-412 (EGIDAGLAHQ…AGRIVEQVVR (388 aa)). Residue 38-45 (GVTGSGKT) coordinates ATP. A Beta-hairpin motif is present at residues 91-114 (YYDYYQPEAYVPSSDTFIEKDASI). Positions 429 to 582 (QVDDLLSEIH…QIAFNLEHGI (154 aa)) constitute a Helicase C-terminal domain. Residues 601–625 (PGSRSKKRKGMAKAAEESARYENEL) are disordered. Residues 614–625 (AAEESARYENEL) show a composition bias toward basic and acidic residues. A UVR domain is found at 632-667 (NKRIRQLEEKMYQLARDLEFEAAAQMRDEIGKLRER).

Belongs to the UvrB family. In terms of assembly, forms a heterotetramer with UvrA during the search for lesions. Interacts with UvrC in an incision complex.

Its subcellular location is the cytoplasm. In terms of biological role, the UvrABC repair system catalyzes the recognition and processing of DNA lesions. A damage recognition complex composed of 2 UvrA and 2 UvrB subunits scans DNA for abnormalities. Upon binding of the UvrA(2)B(2) complex to a putative damaged site, the DNA wraps around one UvrB monomer. DNA wrap is dependent on ATP binding by UvrB and probably causes local melting of the DNA helix, facilitating insertion of UvrB beta-hairpin between the DNA strands. Then UvrB probes one DNA strand for the presence of a lesion. If a lesion is found the UvrA subunits dissociate and the UvrB-DNA preincision complex is formed. This complex is subsequently bound by UvrC and the second UvrB is released. If no lesion is found, the DNA wraps around the other UvrB subunit that will check the other stand for damage. The polypeptide is UvrABC system protein B (Pseudomonas syringae pv. tomato (strain ATCC BAA-871 / DC3000)).